The primary structure comprises 605 residues: Membrane protein insertase YidC (605 aa).

Residues 8-28 (MIIAIALSLAVLLGWNYFVAA) form a helical membrane-spanning segment. The span at 35–47 (RQQQAQTSASPSP) shows a compositional bias: low complexity. Residues 35–71 (RQQQAQTSASPSPKEGGPSAPVPGTLPGASGGNPQAA) are disordered. 4 helical membrane passes run 377 to 397 (LFGN…LFFL), 451 to 471 (WPVV…FVTI), 496 to 516 (LFGL…WPIV), and 540 to 560 (FTFM…GLVI).

The protein belongs to the OXA1/ALB3/YidC family. Type 1 subfamily. In terms of assembly, interacts with the Sec translocase complex via SecD. Specifically interacts with transmembrane segments of nascent integral membrane proteins during membrane integration.

The protein resides in the cell inner membrane. In terms of biological role, required for the insertion and/or proper folding and/or complex formation of integral membrane proteins into the membrane. Involved in integration of membrane proteins that insert both dependently and independently of the Sec translocase complex, as well as at least some lipoproteins. Aids folding of multispanning membrane proteins. This is Membrane protein insertase YidC from Methylobacterium nodulans (strain LMG 21967 / CNCM I-2342 / ORS 2060).